A 191-amino-acid polypeptide reads, in one-letter code: Peptide methionine sulfoxide reductase (191 aa).

Disordered regions lie at residues 1–20 (MASS…TPEN) and 168–191 (EKGG…KCYG).

It belongs to the MsrA Met sulfoxide reductase family.

It catalyses the reaction L-methionyl-[protein] + [thioredoxin]-disulfide + H2O = L-methionyl-(S)-S-oxide-[protein] + [thioredoxin]-dithiol. It carries out the reaction [thioredoxin]-disulfide + L-methionine + H2O = L-methionine (S)-S-oxide + [thioredoxin]-dithiol. In terms of biological role, has an important function as a repair enzyme for proteins that have been inactivated by oxidation. Catalyzes the reversible oxidation-reduction of methionine sulfoxide in proteins to methionine. This is Peptide methionine sulfoxide reductase from Fragaria ananassa (Strawberry).